The chain runs to 244 residues: ATP synthase subunit a (244 aa).

6 consecutive transmembrane segments (helical) span residues 17 to 37, 75 to 95, 112 to 132, 164 to 184, 196 to 216, and 217 to 237; these read LTNILMITVASVIVLLIAILT, FLALGVTLLMYIFVSNMLGLP, DPAITLTLAVMVVSLTHYYGV, LTLGLRLYGNIFAGEILLGLL, FFLGLVGTVGAIIPMLAWQAF, and SLFIGTIQAFIFTMLTMVYMS.

The protein belongs to the ATPase A chain family. In terms of assembly, F-type ATPases have 2 components, CF(1) - the catalytic core - and CF(0) - the membrane proton channel. CF(1) has five subunits: alpha(3), beta(3), gamma(1), delta(1), epsilon(1). CF(0) has three main subunits: a(1), b(2) and c(9-12). The alpha and beta chains form an alternating ring which encloses part of the gamma chain. CF(1) is attached to CF(0) by a central stalk formed by the gamma and epsilon chains, while a peripheral stalk is formed by the delta and b chains.

The protein localises to the cell membrane. Functionally, key component of the proton channel; it plays a direct role in the translocation of protons across the membrane. The chain is ATP synthase subunit a from Bacillus velezensis (strain DSM 23117 / BGSC 10A6 / LMG 26770 / FZB42) (Bacillus amyloliquefaciens subsp. plantarum).